We begin with the raw amino-acid sequence, 461 residues long: Asparagine--tRNA ligase (461 aa).

The protein belongs to the class-II aminoacyl-tRNA synthetase family. Homodimer.

It localises to the cytoplasm. It catalyses the reaction tRNA(Asn) + L-asparagine + ATP = L-asparaginyl-tRNA(Asn) + AMP + diphosphate + H(+). The chain is Asparagine--tRNA ligase from Nitratidesulfovibrio vulgaris (strain DP4) (Desulfovibrio vulgaris).